The chain runs to 694 residues: Elongation factor G (694 aa).

The tr-type G domain occupies 8 to 287 (EDYRNFGIMA…AVVEFLPAPT (280 aa)). GTP-binding positions include 17–24 (AHIDAGKT), 86–90 (DTPGH), and 140–143 (NKMD).

Belongs to the TRAFAC class translation factor GTPase superfamily. Classic translation factor GTPase family. EF-G/EF-2 subfamily.

It is found in the cytoplasm. In terms of biological role, catalyzes the GTP-dependent ribosomal translocation step during translation elongation. During this step, the ribosome changes from the pre-translocational (PRE) to the post-translocational (POST) state as the newly formed A-site-bound peptidyl-tRNA and P-site-bound deacylated tRNA move to the P and E sites, respectively. Catalyzes the coordinated movement of the two tRNA molecules, the mRNA and conformational changes in the ribosome. This is Elongation factor G from Brucella melitensis biotype 1 (strain ATCC 23456 / CCUG 17765 / NCTC 10094 / 16M).